Reading from the N-terminus, the 513-residue chain is Proline-rich receptor-like protein kinase PERK3 (513 aa).

Topologically, residues 1–123 are extracellular; sequence MARSNRCVPQ…SPPSPSRLST (123 aa). N11 carries N-linked (GlcNAc...) asparagine glycosylation. Residues 27-36 are compositionally biased toward polar residues; that stretch reads LKSRWQQITM. The tract at residues 27 to 119 is disordered; that stretch reads LKSRWQQITM…GFSLSPPSPS (93 aa). The N-linked (GlcNAc...) asparagine glycan is linked to N66. A compositionally biased stretch (low complexity) spans 78–89; it reads PSTSTPPRLGNR. The span at 99 to 111 shows a compositional bias: polar residues; the sequence is GQEPTTPTMTPGF. A helical transmembrane segment spans residues 124-144; sequence GAVVGISIGGGVFVLTLIFFL. Residues 145-513 lie on the Cytoplasmic side of the membrane; sequence CKKKRPRDDK…TAQRYGGDSL (369 aa). Position 172 is a phosphothreonine (T172). The Protein kinase domain occupies 183–334; that stretch reads FSEANLLGEG…DFGLAKIALD (152 aa). Residues 189 to 197 and K211 each bind ATP; that span reads LGEGGFGFV. Y256 is subject to Phosphotyrosine. The active-site Proton acceptor is D307. The residue at position 340 (S340) is a Phosphoserine. Residues T341 and T346 each carry the phosphothreonine modification. Position 354 is a phosphotyrosine (Y354).

This sequence belongs to the protein kinase superfamily. Ser/Thr protein kinase family. In terms of tissue distribution, expressed at low levels in inflorescence bolt, flower buds, siliques, roots, seedlings and leaves.

It is found in the cell membrane. It carries out the reaction L-seryl-[protein] + ATP = O-phospho-L-seryl-[protein] + ADP + H(+). The enzyme catalyses L-threonyl-[protein] + ATP = O-phospho-L-threonyl-[protein] + ADP + H(+). This is Proline-rich receptor-like protein kinase PERK3 (PERK3) from Arabidopsis thaliana (Mouse-ear cress).